Consider the following 151-residue polypeptide: Protein Turandot Z (151 aa).

Residues 1-23 (MSRLIHLSFVLALLACLTGPISA) form the signal peptide.

The protein belongs to the Turandot family.

The protein localises to the secreted. In terms of biological role, a humoral factor that may play a role in stress tolerance. The chain is Protein Turandot Z from Drosophila pseudoobscura pseudoobscura (Fruit fly).